A 248-amino-acid polypeptide reads, in one-letter code: 3-oxoacyl-[acyl-carrier-protein] reductase FabG (248 aa).

Residues 14 to 17 (GGSR), 65 to 66 (DV), and Asn92 contribute to the NADP(+) site. Ser144 contributes to the substrate binding site. Catalysis depends on Tyr157, which acts as the Proton acceptor. NADP(+) is bound by residues 157-161 (YAAAK) and Ile190.

The protein belongs to the short-chain dehydrogenases/reductases (SDR) family. As to quaternary structure, homotetramer.

It catalyses the reaction a (3R)-hydroxyacyl-[ACP] + NADP(+) = a 3-oxoacyl-[ACP] + NADPH + H(+). The protein operates within lipid metabolism; fatty acid biosynthesis. Its function is as follows. Catalyzes the NADPH-dependent reduction of beta-ketoacyl-ACP substrates to beta-hydroxyacyl-ACP products, the first reductive step in the elongation cycle of fatty acid biosynthesis. In Chlamydia trachomatis serovar D (strain ATCC VR-885 / DSM 19411 / UW-3/Cx), this protein is 3-oxoacyl-[acyl-carrier-protein] reductase FabG (fabG).